The primary structure comprises 100 residues: ATP synthase subunit c (100 aa).

Transmembrane regions (helical) follow at residues 26 to 46 and 71 to 91; these read FSVVAAGIGLGVAALGGAIGM and MFIALAMIEAQVIYALVIALI.

The protein belongs to the ATPase C chain family. F-type ATPases have 2 components, F(1) - the catalytic core - and F(0) - the membrane proton channel. F(1) has five subunits: alpha(3), beta(3), gamma(1), delta(1), epsilon(1). F(0) has three main subunits: a(1), b(2) and c(10-14). The alpha and beta chains form an alternating ring which encloses part of the gamma chain. F(1) is attached to F(0) by a central stalk formed by the gamma and epsilon chains, while a peripheral stalk is formed by the delta and b chains.

The protein resides in the cell inner membrane. F(1)F(0) ATP synthase produces ATP from ADP in the presence of a proton or sodium gradient. F-type ATPases consist of two structural domains, F(1) containing the extramembraneous catalytic core and F(0) containing the membrane proton channel, linked together by a central stalk and a peripheral stalk. During catalysis, ATP synthesis in the catalytic domain of F(1) is coupled via a rotary mechanism of the central stalk subunits to proton translocation. In terms of biological role, key component of the F(0) channel; it plays a direct role in translocation across the membrane. A homomeric c-ring of between 10-14 subunits forms the central stalk rotor element with the F(1) delta and epsilon subunits. The sequence is that of ATP synthase subunit c from Campylobacter fetus subsp. fetus (strain 82-40).